Reading from the N-terminus, the 247-residue chain is Pyridoxine 5'-phosphate synthase (247 aa).

Asn-7 serves as a coordination point for 3-amino-2-oxopropyl phosphate. A 1-deoxy-D-xylulose 5-phosphate-binding site is contributed by 9-10 (DH). Position 18 (Arg-18) interacts with 3-amino-2-oxopropyl phosphate. His-43 functions as the Proton acceptor in the catalytic mechanism. 1-deoxy-D-xylulose 5-phosphate contacts are provided by Arg-45 and His-50. Glu-70 (proton acceptor) is an active-site residue. Residue Thr-100 participates in 1-deoxy-D-xylulose 5-phosphate binding. The active-site Proton donor is the His-190. Residues Gly-191 and 212-213 (GH) each bind 3-amino-2-oxopropyl phosphate.

It belongs to the PNP synthase family. Homooctamer; tetramer of dimers.

It is found in the cytoplasm. It carries out the reaction 3-amino-2-oxopropyl phosphate + 1-deoxy-D-xylulose 5-phosphate = pyridoxine 5'-phosphate + phosphate + 2 H2O + H(+). It participates in cofactor biosynthesis; pyridoxine 5'-phosphate biosynthesis; pyridoxine 5'-phosphate from D-erythrose 4-phosphate: step 5/5. Its function is as follows. Catalyzes the complicated ring closure reaction between the two acyclic compounds 1-deoxy-D-xylulose-5-phosphate (DXP) and 3-amino-2-oxopropyl phosphate (1-amino-acetone-3-phosphate or AAP) to form pyridoxine 5'-phosphate (PNP) and inorganic phosphate. In Synechococcus sp. (strain WH7803), this protein is Pyridoxine 5'-phosphate synthase.